A 268-amino-acid chain; its full sequence is MLQYPHINPVALQLGPIKIHWYGLMYLLGIFAGWYLTRYRAKVKPWAPIKPEQVGDLTFYVALGVILGGRIGYIIFYNLPYYFHNPSQMFFLWDGGMSFHGGFIGVLIAFALFARKIGANFFDLGEFVAPVIPIGLGAGRIGNFINGELWGKVTDSPLGMVFPTGGPLPRYPSQLFEFFFEGVVLFSVLWLVTIKKRPRYLVLGLFMFLYGCARFICEFFRQPDPQYGYIFFNWMTMGQILSIPMILLGAVILIAVFIKIRKNKCKNI.

The next 4 helical transmembrane spans lie at 14 to 34 (LGPIKIHWYGLMYLLGIFAGW), 57 to 77 (LTFYVALGVILGGRIGYIIFY), 90 to 110 (FFLWDGGMSFHGGFIGVLIAF), and 117 to 137 (IGANFFDLGEFVAPVIPIGLG). Residue R140 participates in a 1,2-diacyl-sn-glycero-3-phospho-(1'-sn-glycerol) binding. A run of 3 helical transmembrane segments spans residues 174–194 (QLFEFFFEGVVLFSVLWLVTI), 200–220 (YLVLGLFMFLYGCARFICEFF), and 240–260 (ILSIPMILLGAVILIAVFIKI).

The protein belongs to the Lgt family.

Its subcellular location is the cell inner membrane. It carries out the reaction L-cysteinyl-[prolipoprotein] + a 1,2-diacyl-sn-glycero-3-phospho-(1'-sn-glycerol) = an S-1,2-diacyl-sn-glyceryl-L-cysteinyl-[prolipoprotein] + sn-glycerol 1-phosphate + H(+). Its pathway is protein modification; lipoprotein biosynthesis (diacylglyceryl transfer). Its function is as follows. Catalyzes the transfer of the diacylglyceryl group from phosphatidylglycerol to the sulfhydryl group of the N-terminal cysteine of a prolipoprotein, the first step in the formation of mature lipoproteins. This chain is Phosphatidylglycerol--prolipoprotein diacylglyceryl transferase, found in Francisella tularensis subsp. tularensis (strain FSC 198).